The chain runs to 775 residues: Glutamine--tRNA ligase (775 aa).

Position 2 is an N-acetylalanine (Ala-2). At Ser-70 the chain carries Phosphoserine. The short motif at 270-280 (PEPNGILHIGH) is the 'HIGH' region element. ATP is bound by residues 271 to 273 (EPN) and 277 to 283 (HIGHAKA). Asp-303 is a binding site for L-glutamine. N6-acetyllysine is present on Lys-309. Tyr-438 is an L-glutamine binding site. Residues Thr-457, 486–487 (RL), and 494–496 (VSK) contribute to the ATP site. Positions 493–497 (VVSKR) match the 'KMSKS' region motif. Ser-495 is subject to Phosphoserine.

It belongs to the class-I aminoacyl-tRNA synthetase family. As to quaternary structure, monomer. Part of a multisubunit complex that groups tRNA ligases for Arg (RARS1), Asp (DARS1), Gln (QARS1), Ile (IARS1), Leu (LARS1), Lys (KARS1), Met (MARS1) the bifunctional ligase for Glu and Pro (EPRS1) and the auxiliary subunits AIMP1/p43, AIMP2/p38 and EEF1E1/p18. Interacts with RARS1. Part of a complex composed of RARS1, QARS1 and AIMP1.

It is found in the cytoplasm. The protein resides in the cytosol. It carries out the reaction tRNA(Gln) + L-glutamine + ATP = L-glutaminyl-tRNA(Gln) + AMP + diphosphate. Functionally, glutamine--tRNA ligase. Plays a critical role in brain development. The protein is Glutamine--tRNA ligase (QARS1) of Bos taurus (Bovine).